A 647-amino-acid chain; its full sequence is Probable inactive receptor kinase RLK902 (647 aa).

The signal sequence occupies residues 1-29; it reads MRLFFTPSMSNLSIFFSILLLSLPLPSIG. LRR repeat units lie at residues 69–93, 94–118, 119–142, 144–165, and 166–192; these read GGRV…IFGN, LTQL…LGSC, SDLR…LFSL, NLVR…GFKN, and LTRL…SLDQ. Residues 268–288 traverse the membrane as a helical segment; sequence GIVIGCVVGLSLIVMILMVLF. In terms of domain architecture, Protein kinase spans 365–639; it reads RASAEVLGKG…EVVRRIQELR (275 aa). Ser-367 is modified (phosphoserine). Residue 371–379 coordinates ATP; the sequence is LGKGTFGTA. Thr-388 carries the phosphothreonine modification. Position 393 (Lys-393) interacts with ATP. A Phosphoserine modification is found at Ser-444. Phosphothreonine is present on Thr-520. Residue Ser-540 is modified to Phosphoserine. A Phosphothreonine modification is found at Thr-618.

The protein belongs to the protein kinase superfamily. Ser/Thr protein kinase family. Interacts with At3g17950, At3g27210 and At5g05190. In terms of processing, autophosphorylation. In terms of tissue distribution, expressed in root tips, lateral root primordia, stipules, and floral organ abscission zones.

It localises to the cell membrane. This is Probable inactive receptor kinase RLK902 (RLK902) from Arabidopsis thaliana (Mouse-ear cress).